The sequence spans 281 residues: 4-deoxy-L-threo-5-hexosulose-uronate ketol-isomerase (281 aa).

Residues His198, His200, Glu205, and His248 each contribute to the Zn(2+) site.

It belongs to the KduI family. Zn(2+) serves as cofactor.

It carries out the reaction 5-dehydro-4-deoxy-D-glucuronate = 3-deoxy-D-glycero-2,5-hexodiulosonate. Its pathway is glycan metabolism; pectin degradation; 2-dehydro-3-deoxy-D-gluconate from pectin: step 4/5. Catalyzes the isomerization of 5-dehydro-4-deoxy-D-glucuronate to 3-deoxy-D-glycero-2,5-hexodiulosonate. This is 4-deoxy-L-threo-5-hexosulose-uronate ketol-isomerase from Levilactobacillus brevis (strain ATCC 367 / BCRC 12310 / CIP 105137 / JCM 1170 / LMG 11437 / NCIMB 947 / NCTC 947) (Lactobacillus brevis).